Here is a 277-residue protein sequence, read N- to C-terminus: Urease accessory protein UreD (277 aa).

Belongs to the UreD family. As to quaternary structure, ureD, UreF and UreG form a complex that acts as a GTP-hydrolysis-dependent molecular chaperone, activating the urease apoprotein by helping to assemble the nickel containing metallocenter of UreC. The UreE protein probably delivers the nickel.

It is found in the cytoplasm. Its function is as follows. Required for maturation of urease via the functional incorporation of the urease nickel metallocenter. The protein is Urease accessory protein UreD of Pseudomonas entomophila (strain L48).